A 277-amino-acid polypeptide reads, in one-letter code: Uracil phosphoribosyltransferase homolog (277 aa).

Residues Met-1–Asp-69 are disordered. Residues Ala-37–Asp-69 are compositionally biased toward low complexity. Residues Arg-101, Arg-110, and Glu-144 to Asn-147 each bind GTP. Arg-154 provides a ligand contact to 5-phospho-alpha-D-ribose 1-diphosphate. Residues Arg-171 and Arg-200 each contribute to the GTP site. Tyr-206–Thr-214 provides a ligand contact to 5-phospho-alpha-D-ribose 1-diphosphate. A uracil-binding site is contributed by Thr-267–Phe-269.

It belongs to the UPRTase family.

It localises to the cytoplasm. Its subcellular location is the nucleus. This is Uracil phosphoribosyltransferase homolog (UPRT) from Gallus gallus (Chicken).